A 449-amino-acid polypeptide reads, in one-letter code: CCAAT/enhancer-binding protein (449 aa).

Disordered stretches follow at residues 211–233 (HATY…TIKE), 276–302 (GNPL…NGSQ), and 334–386 (SKLH…KAKV). 3 stretches are compositionally biased toward low complexity: residues 215-229 (NNSS…SDSS), 280-301 (NGGN…SNGS), and 339-349 (QQQHQQHQQQQ). Over residues 357–368 (KHVDKGTDEYRR) the composition is skewed to basic and acidic residues. The bZIP domain occupies 363-426 (TDEYRRRRER…QLHKQIYMQL (64 aa)). The basic motif stretch occupies residues 367–396 (RRRRERNNIAVRKSREKAKVRSREVEERVK). Positions 398 to 405 (LLKEKDAL) are leucine-zipper.

Belongs to the bZIP family. C/EBP subfamily. In terms of assembly, binds DNA as a dimer and can form stable heterodimers. Interacts with trbl. Post-translationally, ubiquitination/deubiquitination regulates border cell migration. Ubiquitination is stimulated by trbl, which leads to proteasomal degradation and inhibits border cell migration. Deubiquitination by Usp47, leads to its stabilization and promotes border cell migration.

The protein localises to the nucleus. Functionally, required for the expression of gene products mediating border cell migration. Among the DNA sequences that this protein binds with high affinity is a conserved site within the promoter of its gene. This Drosophila melanogaster (Fruit fly) protein is CCAAT/enhancer-binding protein (slbo).